The primary structure comprises 1088 residues: RNA-directed RNA polymerase (1088 aa).

Residues 501 to 687 (LSYGDVTRFL…AKRYIAGGKI (187 aa)) enclose the RdRp catalytic domain.

This sequence belongs to the reoviridae RNA-directed RNA polymerase family. Interacts with VP3 (Potential). Interacts with VP2; this interaction activates VP1. Interacts with NSP5; this interaction is probably necessary for the formation of functional virus factories. Interacts with NSP2; this interaction is weak. It depends on Mg(2+) as a cofactor.

The protein localises to the virion. The enzyme catalyses RNA(n) + a ribonucleoside 5'-triphosphate = RNA(n+1) + diphosphate. In terms of biological role, RNA-directed RNA polymerase that is involved in both transcription and genome replication. Together with VP3 capping enzyme, forms an enzyme complex positioned near the channels situated at each of the five-fold vertices of the core. Following infection, the outermost layer of the virus is lost, leaving a double-layered particle (DLP) made up of the core and VP6 shell. VP1 then catalyzes the transcription of fully conservative plus-strand genomic RNAs that are extruded through the DLP's channels into the cytoplasm where they function as mRNAs for translation of viral proteins. One copy of each of the viral (+)RNAs is also recruited during core assembly, together with newly synthesized polymerase complexes and VP2. The polymerase of these novo-formed particles catalyzes the synthesis of complementary minus-strands leading to dsRNA formation. To do so, the polymerase specifically recognizes and binds 4 bases 5'-UGUG-3' in the conserved 3'-sequence of plus-strand RNA templates. VP2 presumably activates the autoinhibited VP1-RNA complex to coordinate packaging and genome replication. Once dsRNA synthesis is complete, the polymerase switches to the transcriptional mode, thus providing secondary transcription. This chain is RNA-directed RNA polymerase, found in Homo sapiens (Human).